Consider the following 124-residue polypeptide: UPF0344 protein OB1184 (124 aa).

A run of 4 helical transmembrane segments spans residues 3 to 23 (HMHITSWALGLILFIIALVMY), 33 to 53 (IIHMILRLMFILIIITGGILT), 62 to 82 (MPILGEALVKALAGLWLVAMM), and 104 to 124 (IALVLVIVLGFFRLPMGFLFI).

This sequence belongs to the UPF0344 family.

The protein resides in the cell membrane. This is UPF0344 protein OB1184 from Oceanobacillus iheyensis (strain DSM 14371 / CIP 107618 / JCM 11309 / KCTC 3954 / HTE831).